The sequence spans 1610 residues: Adenylate cyclase type 10 (1610 aa).

2 consecutive Guanylate cyclase domains span residues 42–179 and 293–418; these read VLMF…RLAQ and TIVF…ARMM. Mg(2+)-binding residues include Asp-47 and Ile-48. 47–52 provides a ligand contact to ATP; it reads DISGFT. A hydrogencarbonate-binding site is contributed by Lys-95. Asp-99 contacts Mg(2+). ATP-binding residues include Asp-99 and Lys-144. The hydrogencarbonate site is built by Val-167, Arg-176, and Met-337. ATP-binding positions include Val-406 and 412 to 416; that span reads NLAAR.

This sequence belongs to the adenylyl cyclase class-4/guanylyl cyclase family. The cofactor is Mg(2+). Requires Mn(2+) as cofactor. Post-translationally, cleavage may occur to generate the active 48 kDa form. As to expression, detected in airway epithelial cells and testis (at protein level). Weakly expressed in multiple tissues. Expressed in brain, heart, kidney, liver, lung, pancreas, peripheral blood leukocytes, placenta, skeletal muscle, stomach, thymus, airway epithelial cells, duodenum, jejunum and ileum. Very low level of expression in bone.

The protein resides in the cell membrane. It localises to the cytoplasm. Its subcellular location is the cytoskeleton. The protein localises to the perinuclear region. It is found in the nucleus. The protein resides in the cell projection. It localises to the cilium. Its subcellular location is the mitochondrion. The catalysed reaction is ATP = 3',5'-cyclic AMP + diphosphate. Activated by manganese or magnesium ions. In the presence of magnesium ions, the enzyme is activated by bicarbonate. In the presence of manganese ions, the enzyme is inhibited by bicarbonate. In the absence of magnesium and bicarbonate, the enzyme is weakly activated by calcium. Calcium mildly increases the enzyme activity, also in the presence of magnesium ions. Functionally, catalyzes the formation of the signaling molecule cAMP. May function as sensor that mediates responses to changes in cellular bicarbonate and CO(2) levels. Has a critical role in mammalian spermatogenesis by producing the cAMP which regulates cAMP-responsive nuclear factors indispensable for sperm maturation in the epididymis. Induces capacitation, the maturational process that sperm undergo prior to fertilization. Involved in ciliary beat regulation. This Homo sapiens (Human) protein is Adenylate cyclase type 10 (ADCY10).